The chain runs to 402 residues: Zinc finger protein 586 (402 aa).

Residues valine 15 to proline 87 form the KRAB domain. The segment at tyrosine 88–arginine 116 adopts a C2H2-type 1; degenerate zinc-finger fold. The segment at tyrosine 122–histidine 144 adopts a C2H2-type 2; degenerate zinc-finger fold. Residues tyrosine 150 to histidine 172 form a C2H2-type 3; degenerate zinc finger. 8 consecutive C2H2-type zinc fingers follow at residues tyrosine 178–histidine 200, tyrosine 206–histidine 228, tyrosine 234–histidine 256, tyrosine 262–histidine 284, tyrosine 290–histidine 312, histidine 317–histidine 339, tyrosine 345–histidine 367, and tyrosine 373–histidine 395.

The protein belongs to the krueppel C2H2-type zinc-finger protein family.

It localises to the nucleus. In terms of biological role, may be involved in transcriptional regulation. This Homo sapiens (Human) protein is Zinc finger protein 586 (ZNF586).